Here is a 426-residue protein sequence, read N- to C-terminus: Glutamate-1-semialdehyde 2,1-aminomutase (426 aa).

Lys-265 bears the N6-(pyridoxal phosphate)lysine mark.

This sequence belongs to the class-III pyridoxal-phosphate-dependent aminotransferase family. HemL subfamily. Homodimer. Requires pyridoxal 5'-phosphate as cofactor.

The protein resides in the cytoplasm. The catalysed reaction is (S)-4-amino-5-oxopentanoate = 5-aminolevulinate. It participates in porphyrin-containing compound metabolism; protoporphyrin-IX biosynthesis; 5-aminolevulinate from L-glutamyl-tRNA(Glu): step 2/2. This chain is Glutamate-1-semialdehyde 2,1-aminomutase, found in Hahella chejuensis (strain KCTC 2396).